We begin with the raw amino-acid sequence, 487 residues long: Benzaldehyde dehydrogenase [NAD(+)] (487 aa).

Residue 232 to 237 participates in NAD(+) binding; the sequence is GSTQVG. Catalysis depends on residues Glu-254 and Cys-288.

It belongs to the aldehyde dehydrogenase family. Homotetramer.

The enzyme catalyses benzaldehyde + NAD(+) + H2O = benzoate + NADH + 2 H(+). In Pseudomonas putida (Arthrobacter siderocapsulatus), this protein is Benzaldehyde dehydrogenase [NAD(+)] (xylC).